We begin with the raw amino-acid sequence, 676 residues long: F420-dependent formate dehydrogenase 2 subunit alpha (676 aa).

A 4Fe-4S Mo/W bis-MGD-type domain is found at 4–60; it reads FKVVHTICPYCGTGCGIDLVVKDGKVVDSHPFKRHPVNEGKVCIKGNYCYEFVHSED. The [4Fe-4S] cluster site is built by Cys11, Cys14, Cys18, and Cys46. Residue Sec133 is a non-standard amino acid, selenocysteine.

The protein belongs to the prokaryotic molybdopterin-containing oxidoreductase family. Dimer of an alpha (FdhA2) and a beta (FdhB2) subunit. The cofactor is [4Fe-4S] cluster. Requires Mo-bis(molybdopterin guanine dinucleotide) as cofactor. Zn(2+) serves as cofactor.

The enzyme catalyses oxidized coenzyme F420-(gamma-L-Glu)(n) + formate + 2 H(+) = reduced coenzyme F420-(gamma-L-Glu)(n) + CO2. Its function is as follows. Catalyzes the oxidation of formate to carbon dioxide, with coenzyme F420 as the electron acceptor. In vitro can also use methyl viologen as electron acceptor. This is F420-dependent formate dehydrogenase 2 subunit alpha from Methanococcus maripaludis (strain DSM 14266 / JCM 13030 / NBRC 101832 / S2 / LL).